A 360-amino-acid polypeptide reads, in one-letter code: Protein RecA (360 aa).

65-72 (GPESSGKT) lines the ATP pocket.

It belongs to the RecA family.

Its subcellular location is the cytoplasm. Can catalyze the hydrolysis of ATP in the presence of single-stranded DNA, the ATP-dependent uptake of single-stranded DNA by duplex DNA, and the ATP-dependent hybridization of homologous single-stranded DNAs. It interacts with LexA causing its activation and leading to its autocatalytic cleavage. In Tolumonas auensis (strain DSM 9187 / NBRC 110442 / TA 4), this protein is Protein RecA.